We begin with the raw amino-acid sequence, 784 residues long: Cadherin-5 (784 aa).

Positions Met1 to Ala24 are cleaved as a signal peptide. Positions Gly25 to Arg45 are excised as a propeptide. 5 Cadherin domains span residues Asp46–Phe149, Ser150–Phe256, Thr257–Phe371, Gln372–Pro476, and Glu477–Gln593. The Extracellular portion of the chain corresponds to Asp46 to Gln599. Residues Glu56 and Glu57 each contribute to the Ca(2+) site. N-linked (GlcNAc...) asparagine glycosylation occurs at Asn59. Positions 107, 109, 141, 142, 143, 144, and 145 each coordinate Ca(2+). Asn155 is a glycosylation site (N-linked (GlcNAc...) asparagine). 4 residues coordinate Ca(2+): Asp175, Asp177, His184, and Asp229. N-linked (GlcNAc...) asparagine glycosylation is found at Asn441, Asn523, and Asn535. The helical transmembrane segment at Ala600–Leu620 threads the bilayer. Positions Arg621 to Val660 are required for interaction with PALS1. Residues Arg621–Ile784 lie on the Cytoplasmic side of the membrane.

As to quaternary structure, part of a complex composed of AMOTL2, MAGI1 and CDH5, within the complex AMOTL2 acts as a scaffold protein for the interaction of MAGI1 with CDH5. The complex is required for coupling actin fibers to cell junctions in endothelial cells. Within the complex AMOTL2 (via its N-terminus) interacts with CDH5. Interacts (via cadherin 5 domain) with PTPRB. Interacts with TRPC4. Interacts with KRIT1. Interacts with PARD3. Interacts with RTN4 (isoform B). Interacts with PALS1; the interaction promotes PALS1 localization to cell junctions and is required for CDH5-mediated vascular lumen formation and endothelial cell polarity. Interacts with CTNND1/p120-catenin; the interaction controls CADH5 endocytosis. In terms of processing, phosphorylated on tyrosine residues by KDR/VEGFR-2. Dephosphorylated by PTPRB. O-glycosylated. Expressed in postnatal endothelial cells of the retinal vascular plexus (at protein level).

The protein localises to the cell junction. Its subcellular location is the adherens junction. It localises to the cell membrane. It is found in the cytoplasm. Its function is as follows. Cadherins are calcium-dependent cell adhesion proteins. They preferentially interact with themselves in a homophilic manner in connecting cells; cadherins may thus contribute to the sorting of heterogeneous cell types. This cadherin may play an important role in endothelial cell biology through control of the cohesion and organization of the intercellular junctions. It associates with alpha-catenin forming a link to the cytoskeleton. Plays a role in coupling actin fibers to cell junctions in endothelial cells, via acting as a cell junctional complex anchor for AMOTL2 and MAGI1. Acts in concert with KRIT1 and PALS1 to establish and maintain correct endothelial cell polarity and vascular lumen. These effects are mediated by recruitment and activation of the Par polarity complex and RAP1B. Required for activation of PRKCZ and for localization of phosphorylated PRKCZ, PARD3, TIAM1 and RAP1B to the cell junction. Associates with CTNND1/p120-catenin to control CADH5 endocytosis. This chain is Cadherin-5, found in Mus musculus (Mouse).